A 133-amino-acid chain; its full sequence is Putative dispanin subfamily A member 2d (133 aa).

At 1–57 (MNHTVQTFFSPVNSGQPPNYEMLKEEHKVAVLGVPHNPAPPTSTVIHIRSKTSVPHH) the chain is on the extracellular side. Residue Lys24 forms a Glycyl lysine isopeptide (Lys-Gly) (interchain with G-Cter in ubiquitin) linkage. Residues 58-78 (VVWSLFNTLFMNPCCLGFIAF) form a helical membrane-spanning segment. Residues 79-107 (AYSVKSRDRKMVGNVTGAQAYASTTKCLN) are Cytoplasmic-facing. Glycyl lysine isopeptide (Lys-Gly) (interchain with G-Cter in ubiquitin) cross-links involve residues Lys83, Lys88, and Lys104. The chain crosses the membrane as a helical span at residues 108-128 (IWALILGILMTILLIIIPVLI). Residues 129–133 (FQAHR) are Extracellular-facing.

This sequence belongs to the CD225/Dispanin family.

It localises to the membrane. This chain is Putative dispanin subfamily A member 2d, found in Homo sapiens (Human).